A 147-amino-acid chain; its full sequence is Large ribosomal subunit protein uL15 (147 aa).

Residues 1 to 42 (MTIKLHHLRPAPGSKSNKIRVGRGEGGKRGKTAGRGTKGTKA) form a disordered region.

It belongs to the universal ribosomal protein uL15 family. As to quaternary structure, part of the 50S ribosomal subunit.

Its function is as follows. Binds to the 23S rRNA. This Rhodococcus erythropolis (strain PR4 / NBRC 100887) protein is Large ribosomal subunit protein uL15.